Reading from the N-terminus, the 173-residue chain is Crossover junction endodeoxyribonuclease RuvC (173 aa).

Residues D8, E67, and D139 contribute to the active site. 3 residues coordinate Mg(2+): D8, E67, and D139.

This sequence belongs to the RuvC family. As to quaternary structure, homodimer which binds Holliday junction (HJ) DNA. The HJ becomes 2-fold symmetrical on binding to RuvC with unstacked arms; it has a different conformation from HJ DNA in complex with RuvA. In the full resolvosome a probable DNA-RuvA(4)-RuvB(12)-RuvC(2) complex forms which resolves the HJ. It depends on Mg(2+) as a cofactor.

The protein resides in the cytoplasm. The enzyme catalyses Endonucleolytic cleavage at a junction such as a reciprocal single-stranded crossover between two homologous DNA duplexes (Holliday junction).. Functionally, the RuvA-RuvB-RuvC complex processes Holliday junction (HJ) DNA during genetic recombination and DNA repair. Endonuclease that resolves HJ intermediates. Cleaves cruciform DNA by making single-stranded nicks across the HJ at symmetrical positions within the homologous arms, yielding a 5'-phosphate and a 3'-hydroxyl group; requires a central core of homology in the junction. The consensus cleavage sequence is 5'-(A/T)TT(C/G)-3'. Cleavage occurs on the 3'-side of the TT dinucleotide at the point of strand exchange. HJ branch migration catalyzed by RuvA-RuvB allows RuvC to scan DNA until it finds its consensus sequence, where it cleaves and resolves the cruciform DNA. The chain is Crossover junction endodeoxyribonuclease RuvC from Photorhabdus laumondii subsp. laumondii (strain DSM 15139 / CIP 105565 / TT01) (Photorhabdus luminescens subsp. laumondii).